Here is a 203-residue protein sequence, read N- to C-terminus: Glycerol-3-phosphate acyltransferase (203 aa).

A run of 4 helical transmembrane segments spans residues 3–23, 75–95, 113–133, and 156–176; these read LASA…AILV, LGLE…GHLF, VILG…LIVA, and LLTG…LIYW.

It belongs to the PlsY family. In terms of assembly, probably interacts with PlsX.

The protein localises to the cell inner membrane. It carries out the reaction an acyl phosphate + sn-glycerol 3-phosphate = a 1-acyl-sn-glycero-3-phosphate + phosphate. It functions in the pathway lipid metabolism; phospholipid metabolism. Its function is as follows. Catalyzes the transfer of an acyl group from acyl-phosphate (acyl-PO(4)) to glycerol-3-phosphate (G3P) to form lysophosphatidic acid (LPA). This enzyme utilizes acyl-phosphate as fatty acyl donor, but not acyl-CoA or acyl-ACP. In Thioalkalivibrio sulfidiphilus (strain HL-EbGR7), this protein is Glycerol-3-phosphate acyltransferase.